The sequence spans 683 residues: FAD-binding monooxygenase ausC (683 aa).

N-linked (GlcNAc...) asparagine glycosylation is present at N5. Residues 111–131 (ILIIGAGFGGLLFAVRLIQTG) traverse the membrane as a helical segment. FAD contacts are provided by residues 150 to 153 (TWYW), 162 to 163 (DT), and Y168. 160 to 162 (MCD) serves as a coordination point for NADP(+). N286 carries N-linked (GlcNAc...) asparagine glycosylation. Residues 310 to 316 (TGASAVQ) and 333 to 334 (RT) each bind NADP(+). N525 and N572 each carry an N-linked (GlcNAc...) asparagine glycan.

It belongs to the FAD-binding monooxygenase family. The cofactor is FAD.

It localises to the membrane. It carries out the reaction preaustinoid A + AH2 + O2 = preaustinoid A1 + A + H2O. It participates in secondary metabolite biosynthesis; terpenoid biosynthesis. FAD-binding monooxygenase; part of the gene cluster A that mediates the biosynthesis of austinol and dehydroaustinol, two fungal meroterpenoids. The first step of the pathway is the synthesis of 3,5-dimethylorsellinic acid by the polyketide synthase ausA. 3,5-dimethylorsellinic acid is then prenylated by the polyprenyl transferase ausN. Further epoxidation by the FAD-dependent monooxygenase ausM and cyclization by the probable terpene cyclase ausL lead to the formation of protoaustinoid A. Protoaustinoid A is then oxidized to spiro-lactone preaustinoid A3 by the combined action of the FAD-binding monooxygenases ausB and ausC, and the dioxygenase ausE. Acid-catalyzed keto-rearrangement and ring contraction of the tetraketide portion of preaustinoid A3 by ausJ lead to the formation of preaustinoid A4. The aldo-keto reductase ausK, with the help of ausH, is involved in the next step by transforming preaustinoid A4 into isoaustinone which is in turn hydroxylated by the P450 monooxygenase ausI to form austinolide. Finally, the cytochrome P450 monooxygenase ausG modifies austinolide to austinol. Austinol can be further modified to dehydroaustinol which forms a diffusible complex with diorcinol that initiates conidiation. Due to genetic rearrangements of the clusters and the subsequent loss of some enzymes, the end products of the Emericella nidulans austinoid biosynthesis clusters are austinol and dehydroaustinol, even if additional enzymes, such as the O-acetyltransferase ausQ and the cytochrome P450 monooxygenase ausR are still functional. This Emericella nidulans (strain FGSC A4 / ATCC 38163 / CBS 112.46 / NRRL 194 / M139) (Aspergillus nidulans) protein is FAD-binding monooxygenase ausC.